The chain runs to 282 residues: MRIAVPNKGRLHEPSEELLERAGLHLVDGADRQLHADTVDPDVTVLYARAADIPEYVADGAADVGITGLDQVRESDTDDLVELRDLDFGRCRLVLAAPEESDIETVYDFEDGRIATEFPKITRRYFDRVDVDVDVTEVSGATELTPHVDIADGIVDITSTGTTLRMNRLAVVDEVLESSVRLFAREDTADNEKVKQVDTALGSVLAADDKRYLMMNAPEDALDDVKDVLPGMGGPTVMDIAGSDQLAVHAVVEERAVFETISSLKDVGASDILVTEIERLVE.

Belongs to the ATP phosphoribosyltransferase family. Long subfamily. Requires Mg(2+) as cofactor.

The protein localises to the cytoplasm. The catalysed reaction is 1-(5-phospho-beta-D-ribosyl)-ATP + diphosphate = 5-phospho-alpha-D-ribose 1-diphosphate + ATP. The protein operates within amino-acid biosynthesis; L-histidine biosynthesis; L-histidine from 5-phospho-alpha-D-ribose 1-diphosphate: step 1/9. Feedback inhibited by histidine. Catalyzes the condensation of ATP and 5-phosphoribose 1-diphosphate to form N'-(5'-phosphoribosyl)-ATP (PR-ATP). Has a crucial role in the pathway because the rate of histidine biosynthesis seems to be controlled primarily by regulation of HisG enzymatic activity. The polypeptide is ATP phosphoribosyltransferase (Haloarcula marismortui (strain ATCC 43049 / DSM 3752 / JCM 8966 / VKM B-1809) (Halobacterium marismortui)).